Reading from the N-terminus, the 96-residue chain is Small ribosomal subunit protein bS6 (96 aa).

This sequence belongs to the bacterial ribosomal protein bS6 family.

Binds together with bS18 to 16S ribosomal RNA. The protein is Small ribosomal subunit protein bS6 of Streptococcus equi subsp. equi (strain 4047).